The chain runs to 334 residues: Sensor protein BceS (334 aa).

The next 2 membrane-spanning stretches (helical) occupy residues 13 to 33 (ILII…DSAI) and 35 to 55 (LAPV…FLAV). In terms of domain architecture, Histidine kinase spans 121 to 326 (AWIHEIKTPL…TFTLTFPKEN (206 aa)). At His124 the chain carries Phosphohistidine; by autocatalysis.

The protein localises to the cell membrane. The enzyme catalyses ATP + protein L-histidine = ADP + protein N-phospho-L-histidine.. Member of the two-component regulatory system BceS/BceR involved in the regulation of bacitracin resistance. Activates BceR in response to extracellular bacitracin. This chain is Sensor protein BceS (bceS), found in Halalkalibacterium halodurans (strain ATCC BAA-125 / DSM 18197 / FERM 7344 / JCM 9153 / C-125) (Bacillus halodurans).